Reading from the N-terminus, the 382-residue chain is ADP,ATP carrier protein, mitochondrial (382 aa).

The transit peptide at 1–71 directs the protein to the mitochondrion; that stretch reads MAEQANQPTV…PMMSSSPIFA (71 aa). Solcar repeat units lie at residues 80–173, 185–277, and 285–371; these read KNFM…FKRL, KWFG…LKPV, and DNFF…LQIL. 5 helical membrane passes run 82–109, 150–174, 183–203, 253–274, and 288–308; these read FMIDFLMGGVSAAVSKTAAAPIERVKLL, TANVIRYFPTQALNFAFKDYFKRLF, YWKWFGGNLASGGAAGASSLF, FNISCVGIIVYRGLYFGMYDSL, and FASFALGWLITNGAGLASYPI. ADP is bound by residues R155 and K167. Position 312 (R312) interacts with ADP. Positions 312–317 are important for transport activity; that stretch reads RRRMMM. The Nucleotide carrier signature motif motif lies at 312-317; it reads RRRMMM. Residues 348 to 368 traverse the membrane as a helical segment; that stretch reads AGANILRAIAGAGVLSGYDQL.

The protein belongs to the mitochondrial carrier (TC 2.A.29) family. As to quaternary structure, monomer.

It is found in the mitochondrion inner membrane. The catalysed reaction is ADP(in) + ATP(out) = ADP(out) + ATP(in). With respect to regulation, the matrix-open state (m-state) is inhibited by the membrane-permeable bongkrekic acid (BKA). The cytoplasmic-open state (c-state) is inhibited by the membrane-impermeable toxic inhibitor carboxyatractyloside (CATR). In terms of biological role, ADP:ATP antiporter that mediates import of ADP into the mitochondrial matrix for ATP synthesis, and export of ATP out to fuel the cell. Cycles between the cytoplasmic-open state (c-state) and the matrix-open state (m-state): operates by the alternating access mechanism with a single substrate-binding site intermittently exposed to either the cytosolic (c-state) or matrix (m-state) side of the inner mitochondrial membrane. This chain is ADP,ATP carrier protein, mitochondrial, found in Oryza sativa subsp. japonica (Rice).